The primary structure comprises 591 residues: UvrABC system protein C (591 aa).

Positions 14-91 (DSPGCYLHKD…IQKNMPKYNI (78 aa)) constitute a GIY-YIG domain. A UVR domain is found at 196–231 (DKIVTGLKEKMLAASQAMEFERAAEYRDLISGIATL).

This sequence belongs to the UvrC family. In terms of assembly, interacts with UvrB in an incision complex.

It is found in the cytoplasm. In terms of biological role, the UvrABC repair system catalyzes the recognition and processing of DNA lesions. UvrC both incises the 5' and 3' sides of the lesion. The N-terminal half is responsible for the 3' incision and the C-terminal half is responsible for the 5' incision. The polypeptide is UvrABC system protein C (Streptococcus uberis (strain ATCC BAA-854 / 0140J)).